Here is a 125-residue protein sequence, read N- to C-terminus: Small ribosomal subunit protein eS26 (125 aa).

The protein belongs to the eukaryotic ribosomal protein eS26 family.

The chain is Small ribosomal subunit protein eS26 (RPS26) from Sterkiella nova (Ciliate).